Here is a 157-residue protein sequence, read N- to C-terminus: Cysteine protease Nivulian-2 (157 aa).

Belongs to the intron maturase 2 family. MatK subfamily. Monomer. In terms of processing, glycosylated. In terms of tissue distribution, accumulates in latex (at protein level).

Inhibited by HgCl(2), iodoacetamide (IAA) and, to a far lesser extent, by SDS, hydrogen peroxide H(1)O(2), KCl, NaCl, ZnCl(2), AgSO(4), CdCl(2), FeCl(3), PMSF, Pepstatin A and EDTA. Repressed moderately by many organic solvents such as diethyl ether, ethy lacetate, acetophenone, butanol, trichloroethylene, tetrahydrofuran, methanol, chloroform and dichloromethane, and, to a lesser extent, by propanol, benzyl alcohol and chlorobenzene. Cysteine protease inducing milk clotting by cleaving casein. Exhibits biomedical activities such as wound healing, haemostatic and antibacterial activity, as well as agricultural application in biocontrol process against the infectious management of the root knot nematode Meloidogyne incognita. The polypeptide is Cysteine protease Nivulian-2 (Euphorbia nivulia (Leafy milk hedge)).